The following is a 487-amino-acid chain: ATP-dependent RNA helicase DBP3 (487 aa).

The tract at residues 1-40 (MAKRSRNMESNSERSSRPKKKSKGDAKPEQPPYVQSAELD) is disordered. The short motif at 71–98 (TAFSYLPSDSNQLYGPLEHFSKPTPIQS) is the Q motif element. A Helicase ATP-binding domain is found at 101 to 276 (WPYLFAGRDV…TTFMKEPVTV (176 aa)). 114–121 (AETGSGKT) provides a ligand contact to ATP. Positions 222 to 225 (DEAD) match the DEAD box motif. The Helicase C-terminal domain occupies 291-456 (RIKQIVEVVK…DIPEALLKFG (166 aa)).

The protein belongs to the DEAD box helicase family. DDX5/DBP2 subfamily.

It is found in the nucleus. It localises to the nucleolus. The catalysed reaction is ATP + H2O = ADP + phosphate + H(+). In terms of biological role, ATP-dependent RNA helicase required for 60S ribosomal subunit synthesis. Involved in efficient pre-rRNA processing, predominantly at site A3, which is necessary for the normal formation of 25S and 5.8S rRNAs. This is ATP-dependent RNA helicase DBP3 (DBP3) from Ajellomyces capsulatus (strain NAm1 / WU24) (Darling's disease fungus).